Consider the following 159-residue polypeptide: Crossover junction endodeoxyribonuclease RuvC (159 aa).

Active-site residues include aspartate 7, glutamate 67, and aspartate 139. Residues aspartate 7, glutamate 67, and aspartate 139 each coordinate Mg(2+).

This sequence belongs to the RuvC family. Homodimer which binds Holliday junction (HJ) DNA. The HJ becomes 2-fold symmetrical on binding to RuvC with unstacked arms; it has a different conformation from HJ DNA in complex with RuvA. In the full resolvosome a probable DNA-RuvA(4)-RuvB(12)-RuvC(2) complex forms which resolves the HJ. It depends on Mg(2+) as a cofactor.

The protein resides in the cytoplasm. It carries out the reaction Endonucleolytic cleavage at a junction such as a reciprocal single-stranded crossover between two homologous DNA duplexes (Holliday junction).. Functionally, the RuvA-RuvB-RuvC complex processes Holliday junction (HJ) DNA during genetic recombination and DNA repair. Endonuclease that resolves HJ intermediates. Cleaves cruciform DNA by making single-stranded nicks across the HJ at symmetrical positions within the homologous arms, yielding a 5'-phosphate and a 3'-hydroxyl group; requires a central core of homology in the junction. The consensus cleavage sequence is 5'-(A/T)TT(C/G)-3'. Cleavage occurs on the 3'-side of the TT dinucleotide at the point of strand exchange. HJ branch migration catalyzed by RuvA-RuvB allows RuvC to scan DNA until it finds its consensus sequence, where it cleaves and resolves the cruciform DNA. This chain is Crossover junction endodeoxyribonuclease RuvC, found in Thermosynechococcus vestitus (strain NIES-2133 / IAM M-273 / BP-1).